The sequence spans 411 residues: Multifunctional CCA protein (411 aa).

Positions 8 and 11 each coordinate ATP. The CTP site is built by Gly8 and Arg11. 2 residues coordinate Mg(2+): Asp21 and Asp23. 3 residues coordinate ATP: Arg91, Arg143, and Arg146. Arg91, Arg143, and Arg146 together coordinate CTP. The HD domain maps to 232-333 (TGVHVMMVID…MRLLERCDAL (102 aa)).

This sequence belongs to the tRNA nucleotidyltransferase/poly(A) polymerase family. Bacterial CCA-adding enzyme type 1 subfamily. In terms of assembly, monomer. Can also form homodimers and oligomers. Mg(2+) serves as cofactor. The cofactor is Ni(2+).

It carries out the reaction a tRNA precursor + 2 CTP + ATP = a tRNA with a 3' CCA end + 3 diphosphate. The catalysed reaction is a tRNA with a 3' CCA end + 2 CTP + ATP = a tRNA with a 3' CCACCA end + 3 diphosphate. In terms of biological role, catalyzes the addition and repair of the essential 3'-terminal CCA sequence in tRNAs without using a nucleic acid template. Adds these three nucleotides in the order of C, C, and A to the tRNA nucleotide-73, using CTP and ATP as substrates and producing inorganic pyrophosphate. tRNA 3'-terminal CCA addition is required both for tRNA processing and repair. Also involved in tRNA surveillance by mediating tandem CCA addition to generate a CCACCA at the 3' terminus of unstable tRNAs. While stable tRNAs receive only 3'-terminal CCA, unstable tRNAs are marked with CCACCA and rapidly degraded. This chain is Multifunctional CCA protein, found in Cupriavidus necator (strain ATCC 17699 / DSM 428 / KCTC 22496 / NCIMB 10442 / H16 / Stanier 337) (Ralstonia eutropha).